We begin with the raw amino-acid sequence, 246 residues long: Deoxycytidylate 5-hydroxymethyltransferase (246 aa).

The active site involves cysteine 148.

It belongs to the thymidylate synthase family.

The catalysed reaction is dCMP + (6R)-5,10-methylene-5,6,7,8-tetrahydrofolate + H2O = 5-hydroxymethyl-dCMP + (6S)-5,6,7,8-tetrahydrofolate. The polypeptide is Deoxycytidylate 5-hydroxymethyltransferase (42) (Escherichia coli (Bacteriophage T2)).